Consider the following 208-residue polypeptide: Ribosomal RNA small subunit methyltransferase G (208 aa).

Residues Gly-77, Leu-82, 128–129, and Arg-142 each bind S-adenosyl-L-methionine; that span reads VE.

It belongs to the methyltransferase superfamily. RNA methyltransferase RsmG family.

Its subcellular location is the cytoplasm. The catalysed reaction is guanosine(527) in 16S rRNA + S-adenosyl-L-methionine = N(7)-methylguanosine(527) in 16S rRNA + S-adenosyl-L-homocysteine. In terms of biological role, specifically methylates the N7 position of guanine in position 527 of 16S rRNA. This chain is Ribosomal RNA small subunit methyltransferase G, found in Chromohalobacter salexigens (strain ATCC BAA-138 / DSM 3043 / CIP 106854 / NCIMB 13768 / 1H11).